We begin with the raw amino-acid sequence, 719 residues long: Polyribonucleotide nucleotidyltransferase (719 aa).

Mg(2+)-binding residues include Asp490 and Asp496. One can recognise a KH domain in the interval 557-619 (PKIEIIIIPK…KSIDAALTRI (63 aa)). The region spanning 629–699 (GEIYEGKIRS…KTGKFKLSHK (71 aa)) is the S1 motif domain.

Belongs to the polyribonucleotide nucleotidyltransferase family. The cofactor is Mg(2+).

Its subcellular location is the cytoplasm. The catalysed reaction is RNA(n+1) + phosphate = RNA(n) + a ribonucleoside 5'-diphosphate. Functionally, involved in mRNA degradation. Catalyzes the phosphorolysis of single-stranded polyribonucleotides processively in the 3'- to 5'-direction. The chain is Polyribonucleotide nucleotidyltransferase from Azobacteroides pseudotrichonymphae genomovar. CFP2.